The primary structure comprises 649 residues: Phospholipase A1 PLIP1, chloroplastic (649 aa).

Residues 1–67 (MAFNTAMAST…NNRILAVSVR (67 aa)) constitute a chloroplast transit peptide. The GXSXG motif lies at 420–424 (GHSLG). The active-site Acyl-ester intermediate is the Ser-422. Catalysis depends on charge relay system residues Asp-483 and His-593.

Belongs to the AB hydrolase superfamily. Lipase family.

It localises to the plastid. It is found in the chloroplast thylakoid membrane. The catalysed reaction is a 1,2-diacyl-sn-glycero-3-phosphocholine + H2O = a 2-acyl-sn-glycero-3-phosphocholine + a fatty acid + H(+). The enzyme catalyses a 1,2-diacyl-3-O-(beta-D-galactosyl)-sn-glycerol + 2 H2O = 3-beta-D-galactosyl-sn-glycerol + 2 a fatty acid + 2 H(+). In terms of biological role, sn-1-specific phospholipase A1 involved in seed oil biosynthesis. Hydrolyzes polyunsaturated acyl groups from a unique chloroplast-specific phosphatidylglycerol (PG) that contains 16:1 delta 3-trans as its second acyl group. The polyunsaturated acyl groups released by PLIP1 are exported from the chloroplast, reincorporated into phosphatidylcholine (PC), and ultimately enter seed triacylglycerol (TAG). In vitro, possesses broad substrate specificity. Can hydrolyze the galactolipid monogalactosyldiacylglycerol (MGDG), and the phoshpolipids phosphatidylcholine (PC), phosphatidylethanolamine (PE), phosphatidic acid (PA), phosphatidylserine (PS) phosphatidylglycerol (PG) and phosphatidylinositol (PI). This chain is Phospholipase A1 PLIP1, chloroplastic, found in Arabidopsis thaliana (Mouse-ear cress).